The sequence spans 86 residues: Small ribosomal subunit protein bS18 (86 aa).

The protein belongs to the bacterial ribosomal protein bS18 family. As to quaternary structure, part of the 30S ribosomal subunit. Forms a tight heterodimer with protein bS6.

Functionally, binds as a heterodimer with protein bS6 to the central domain of the 16S rRNA, where it helps stabilize the platform of the 30S subunit. This is Small ribosomal subunit protein bS18 from Maridesulfovibrio salexigens (strain ATCC 14822 / DSM 2638 / NCIMB 8403 / VKM B-1763) (Desulfovibrio salexigens).